Consider the following 801-residue polypeptide: Bromodomain-containing protein 2 (801 aa).

N-acetylmethionine is present on M1. At T6 the chain carries Phosphothreonine. Residue S37 is modified to Phosphoserine. The interval 53-73 (ALQLTPANPPPPEVSNPKKPG) is disordered. The Bromo 1 domain maps to 74-180 (RVTNQLQYLH…KIFLQKVASM (107 aa)). A protein is bound by residues D112, Y155, N156, K157, D160, and D161. Disordered stretches follow at residues 268-349 (PPAQ…LSEQ), 456-647 (EPLE…YDEK), and 737-801 (EKRL…SDSG). Positions 285–298 (TTTPTPTAILAPGS) are enriched in low complexity. Residues S298, S301, and S305 each carry the phosphoserine modification. Basic and acidic residues predominate over residues 316 to 332 (MRRESGRPIKPPRKDLP). A Bromo 2 domain is found at 344–453 (GKLSEQLKHC…DVFEFRYAKM (110 aa)). The span at 481–514 (SSEESSSESSSEEEEEEDEEDEEEEESESSDSEE) shows a compositional bias: acidic residues. Over residues 544–566 (KPKRKREKKEKKKKRKAEKHRGR) the composition is skewed to basic residues. A Nuclear localization signal motif is present at residues 555–559 (KKKRK). The span at 592 to 612 (GSGGGSAALGPSGFGPSGGSG) shows a compositional bias: gly residues. One can recognise an NET domain in the interval 632–714 (DSEEEEESRP…SCLRKKPRKP (83 aa)). A Phosphoserine modification is found at S633. Low complexity predominate over residues 763 to 795 (SSSAQQVAVSRLSASSSSSDSSSSSSSSSSSDT).

The protein belongs to the BET family. In terms of assembly, homodimer. Interacts with E2F1. Interacts with (acetylated) STAT3; promoting STAT3 recruitment to chromatin. Interacts with CTCF; promoting BRD2 recruitment to chromatin. As to quaternary structure, (Microbial infection) Interacts with herpes virus 8 protein LANA1.

It localises to the nucleus. It is found in the chromosome. Its activity is regulated as follows. Inhibited by JQ1, a thieno-triazolo-1,4-diazepine derivative, which specifically inhibits members of the BET family (BRD2, BRD3 and BRD4). The first bromo domain is inhibited by GSK778 (iBET-BD1), which specifically inhibits the first bromo domain of members of the BET family (BRD2, BRD3 and BRD4). The second bromo domain is inhibited by ABBV-744, which specifically inhibits the second bromo domain of members of the BET family (BRD2, BRD3 and BRD4). The second bromo domain is inhibited by GSK046 (iBET-BD2), which specifically inhibits the second bromo domain of members of the BET family (BRD2, BRD3 and BRD4). Functionally, chromatin reader protein that specifically recognizes and binds histone H4 acetylated at 'Lys-5' and 'Lys-12' (H4K5ac and H4K12ac, respectively), thereby controlling gene expression and remodeling chromatin structures. Recruits transcription factors and coactivators to target gene sites, and activates RNA polymerase II machinery for transcriptional elongation. Plays a key role in genome compartmentalization via its association with CTCF and cohesin: recruited to chromatin by CTCF and promotes formation of topologically associating domains (TADs) via its ability to bind acetylated histones, contributing to CTCF boundary formation and enhancer insulation. Also recognizes and binds acetylated non-histone proteins, such as STAT3. Involved in inflammatory response by regulating differentiation of naive CD4(+) T-cells into T-helper Th17: recognizes and binds STAT3 acetylated at 'Lys-87', promoting STAT3 recruitment to chromatin. In addition to acetylated lysines, also recognizes and binds lysine residues on histones that are both methylated and acetylated on the same side chain to form N6-acetyl-N6-methyllysine (Kacme), an epigenetic mark of active chromatin associated with increased transcriptional initiation. Specifically binds histone H4 acetyl-methylated at 'Lys-5' and 'Lys-12' (H4K5acme and H4K12acme, respectively). The sequence is that of Bromodomain-containing protein 2 from Homo sapiens (Human).